The following is a 231-amino-acid chain: Dephospho-CoA kinase (231 aa).

The DPCK domain occupies 29 to 231 (RVGLTGGIAS…IAGALRFDRR (203 aa)). 37 to 42 (ASGKST) serves as a coordination point for ATP.

It belongs to the CoaE family.

Its subcellular location is the cytoplasm. It carries out the reaction 3'-dephospho-CoA + ATP = ADP + CoA + H(+). It participates in cofactor biosynthesis; coenzyme A biosynthesis; CoA from (R)-pantothenate: step 5/5. Its function is as follows. Catalyzes the phosphorylation of the 3'-hydroxyl group of dephosphocoenzyme A to form coenzyme A. The polypeptide is Dephospho-CoA kinase (Cutibacterium acnes (strain DSM 16379 / KPA171202) (Propionibacterium acnes)).